The chain runs to 427 residues: Trigger factor (427 aa).

Residues Gly-163–Pro-248 form the PPIase FKBP-type domain.

Belongs to the FKBP-type PPIase family. Tig subfamily.

It is found in the cytoplasm. It carries out the reaction [protein]-peptidylproline (omega=180) = [protein]-peptidylproline (omega=0). Functionally, involved in protein export. Acts as a chaperone by maintaining the newly synthesized protein in an open conformation. Functions as a peptidyl-prolyl cis-trans isomerase. This Clostridium botulinum (strain Eklund 17B / Type B) protein is Trigger factor.